The chain runs to 123 residues: Putative iron-sulfur cluster insertion protein ErpA (123 aa).

Positions 51, 115, and 117 each coordinate iron-sulfur cluster.

This sequence belongs to the HesB/IscA family. Homodimer. Requires iron-sulfur cluster as cofactor.

Its function is as follows. Required for insertion of 4Fe-4S clusters. This Burkholderia lata (strain ATCC 17760 / DSM 23089 / LMG 22485 / NCIMB 9086 / R18194 / 383) protein is Putative iron-sulfur cluster insertion protein ErpA.